The chain runs to 412 residues: Probable serine/threonine-protein kinase PBL10 (412 aa).

Residue Gly-2 is the site of N-myristoyl glycine attachment. Cys-4 is lipidated: S-palmitoyl cysteine. The interval 15–45 (GASPKYMSSEANDSLGSKSSSVSIRTNPRTE) is disordered. The segment covering 23–43 (SEANDSLGSKSSSVSIRTNPR) has biased composition (polar residues). Position 58 is a phosphothreonine (Thr-58). Positions 69-356 (FRPDSVLGEG…VVSHLEHIQT (288 aa)) constitute a Protein kinase domain. ATP is bound by residues 75-83 (LGEGGFGSV) and Lys-107. Tyr-152 is subject to Phosphotyrosine. The Proton acceptor role is filled by Asp-204. Phosphoserine is present on residues Ser-208 and Ser-238. Phosphothreonine is present on residues Thr-239 and Thr-244. Tyr-252 bears the Phosphotyrosine mark.

The protein belongs to the protein kinase superfamily. Ser/Thr protein kinase family. As to quaternary structure, interacts with the Xanthomonas campestris effector XopAC/AvrAC. As to expression, expressed in stomatal guard cells of leaves.

It localises to the cell membrane. The catalysed reaction is L-seryl-[protein] + ATP = O-phospho-L-seryl-[protein] + ADP + H(+). It catalyses the reaction L-threonyl-[protein] + ATP = O-phospho-L-threonyl-[protein] + ADP + H(+). Its function is as follows. Possible bi-functional kinase. In vitro, it exhibits serine/threonine activity. In vivo, can phosphorylate tyrosine residues of limited substrates. May be involved in plant defense signaling. Required for full light-induced stomatal opening. The polypeptide is Probable serine/threonine-protein kinase PBL10 (Arabidopsis thaliana (Mouse-ear cress)).